A 553-amino-acid chain; its full sequence is Hydroxylamine reductase (553 aa).

Positions 3, 6, 18, and 25 each coordinate [2Fe-2S] cluster. Histidine 252, glutamate 276, cysteine 320, cysteine 408, cysteine 436, cysteine 461, glutamate 495, and lysine 497 together coordinate hybrid [4Fe-2O-2S] cluster. Cysteine 408 bears the Cysteine persulfide mark.

The protein belongs to the HCP family. The cofactor is [2Fe-2S] cluster. It depends on hybrid [4Fe-2O-2S] cluster as a cofactor.

The protein resides in the cytoplasm. It catalyses the reaction A + NH4(+) + H2O = hydroxylamine + AH2 + H(+). Catalyzes the reduction of hydroxylamine to form NH(3) and H(2)O. The polypeptide is Hydroxylamine reductase (Aliivibrio fischeri (strain ATCC 700601 / ES114) (Vibrio fischeri)).